Reading from the N-terminus, the 483-residue chain is Serine/threonine-protein phosphatase 2A regulatory subunit phr2AB (483 aa).

WD repeat units follow at residues 22 to 61 (SDAN…QSSK) and 88 to 129 (EIEE…IKQV). A disordered region spans residues 132-152 (SATTTGPSYNGSLASNNTRSP). 4 WD repeats span residues 206 to 244 (AHAY…ECFN), 255 to 295 (DLTE…LCDN), 314 to 352 (EIIS…KPVK), and 369 to 410 (ENDC…DVCL). A disordered region spans residues 421 to 443 (TKTLTTKMKLRSSKKEPKKPEDI). Residues 433–443 (SKKEPKKPEDI) are compositionally biased toward basic and acidic residues. One copy of the WD 7 repeat lies at 449–483 (EYTKKTLHCAWHPKDNLIAVGAANTVYLYAATENK).

This sequence belongs to the phosphatase 2A regulatory subunit B family. As to quaternary structure, PP2A consists of a trimeric holoenzyme, composed of a 37 kDa catalytic subunit (C subunit) and a 65 kDa constant regulatory subunit (A subunit), that associates with a variety of regulatory subunits (B subunit) such as phr2AB (B55) and psrA (B56 homolog). The trimer may partially dissociates into a core 'AC' dimer equally active compared to the trimer.

It is found in the cytoplasm. It localises to the cytosol. The protein localises to the cytoskeleton. The protein resides in the microtubule organizing center. Its subcellular location is the centrosome. Its function is as follows. The B regulatory subunit might modulate substrate selectivity and catalytic activity, and might also direct the localization of the catalytic enzyme to a particular subcellular compartment. This is Serine/threonine-protein phosphatase 2A regulatory subunit phr2AB (phr2aB) from Dictyostelium discoideum (Social amoeba).